Here is a 423-residue protein sequence, read N- to C-terminus: Gamma-glutamyl phosphate reductase (423 aa).

It belongs to the gamma-glutamyl phosphate reductase family.

It localises to the cytoplasm. The catalysed reaction is L-glutamate 5-semialdehyde + phosphate + NADP(+) = L-glutamyl 5-phosphate + NADPH + H(+). It functions in the pathway amino-acid biosynthesis; L-proline biosynthesis; L-glutamate 5-semialdehyde from L-glutamate: step 2/2. Functionally, catalyzes the NADPH-dependent reduction of L-glutamate 5-phosphate into L-glutamate 5-semialdehyde and phosphate. The product spontaneously undergoes cyclization to form 1-pyrroline-5-carboxylate. The chain is Gamma-glutamyl phosphate reductase from Pseudomonas fluorescens (strain Pf0-1).